A 74-amino-acid polypeptide reads, in one-letter code: Putative defensin-like protein 27 (74 aa).

Residues 1–19 (MVHPRFVFFAFLALSVLLA) form the signal peptide. 4 disulfide bridges follow: C36-C74, C46-C65, C51-C70, and C55-C72.

This sequence belongs to the DEFL family.

It is found in the secreted. This Arabidopsis thaliana (Mouse-ear cress) protein is Putative defensin-like protein 27.